A 463-amino-acid polypeptide reads, in one-letter code: tRNA (guanine(37)-N(1))-methyltransferase (463 aa).

S-adenosyl-L-methionine is bound by residues His207, 245–246 (DL), 274–275 (DG), and Asn305.

Belongs to the class I-like SAM-binding methyltransferase superfamily. TRM5/TYW2 family. Monomer.

It is found in the mitochondrion matrix. The protein resides in the nucleus. The protein localises to the cytoplasm. It carries out the reaction guanosine(37) in tRNA + S-adenosyl-L-methionine = N(1)-methylguanosine(37) in tRNA + S-adenosyl-L-homocysteine + H(+). Functionally, specifically methylates the N1 position of guanosine-37 in various cytoplasmic and mitochondrial tRNAs. Methylation is not dependent on the nature of the nucleoside 5' of the target nucleoside. This is the first step in the biosynthesis of wybutosine (yW), a modified base adjacent to the anticodon of tRNAs and required for accurate decoding. The chain is tRNA (guanine(37)-N(1))-methyltransferase from Pediculus humanus subsp. corporis (Body louse).